The chain runs to 129 residues: Large ribosomal subunit protein bL12 (129 aa).

Belongs to the bacterial ribosomal protein bL12 family. As to quaternary structure, homodimer. Part of the ribosomal stalk of the 50S ribosomal subunit. Forms a multimeric L10(L12)X complex, where L10 forms an elongated spine to which 2 to 4 L12 dimers bind in a sequential fashion. Binds GTP-bound translation factors.

Forms part of the ribosomal stalk which helps the ribosome interact with GTP-bound translation factors. Is thus essential for accurate translation. The protein is Large ribosomal subunit protein bL12 of Maridesulfovibrio salexigens (strain ATCC 14822 / DSM 2638 / NCIMB 8403 / VKM B-1763) (Desulfovibrio salexigens).